The following is an 854-amino-acid chain: Glucans biosynthesis glucosyltransferase H (854 aa).

A run of 7 helical transmembrane segments spans residues I155–L175, I209–M229, V528–L548, I583–L603, F619–F639, F671–L691, and F695–Y715.

Belongs to the glycosyltransferase 2 family. OpgH subfamily.

The protein resides in the cell inner membrane. It functions in the pathway glycan metabolism; osmoregulated periplasmic glucan (OPG) biosynthesis. Its function is as follows. Involved in the biosynthesis of osmoregulated periplasmic glucans (OPGs). The chain is Glucans biosynthesis glucosyltransferase H from Pectobacterium atrosepticum (strain SCRI 1043 / ATCC BAA-672) (Erwinia carotovora subsp. atroseptica).